We begin with the raw amino-acid sequence, 236 residues long: Ubiquinone biosynthesis O-methyltransferase (236 aa).

S-adenosyl-L-methionine is bound by residues Arg-36, Gly-56, Asp-77, and Met-125.

The protein belongs to the methyltransferase superfamily. UbiG/COQ3 family.

It carries out the reaction a 3-demethylubiquinol + S-adenosyl-L-methionine = a ubiquinol + S-adenosyl-L-homocysteine + H(+). It catalyses the reaction a 3-(all-trans-polyprenyl)benzene-1,2-diol + S-adenosyl-L-methionine = a 2-methoxy-6-(all-trans-polyprenyl)phenol + S-adenosyl-L-homocysteine + H(+). It participates in cofactor biosynthesis; ubiquinone biosynthesis. O-methyltransferase that catalyzes the 2 O-methylation steps in the ubiquinone biosynthetic pathway. The polypeptide is Ubiquinone biosynthesis O-methyltransferase (Haemophilus ducreyi (strain 35000HP / ATCC 700724)).